A 352-amino-acid polypeptide reads, in one-letter code: tRNA-specific 2-thiouridylase MnmA (352 aa).

ATP-binding positions include 7-14 (GLSGGVDS) and L33. C94 serves as the catalytic Nucleophile. C94 and C193 are oxidised to a cystine. G119 is a binding site for ATP. The interval 143-145 (KDQ) is interaction with tRNA. C193 functions as the Cysteine persulfide intermediate in the catalytic mechanism. Residues 298–299 (RY) are interaction with tRNA.

This sequence belongs to the MnmA/TRMU family.

Its subcellular location is the cytoplasm. The catalysed reaction is S-sulfanyl-L-cysteinyl-[protein] + uridine(34) in tRNA + AH2 + ATP = 2-thiouridine(34) in tRNA + L-cysteinyl-[protein] + A + AMP + diphosphate + H(+). Its function is as follows. Catalyzes the 2-thiolation of uridine at the wobble position (U34) of tRNA, leading to the formation of s(2)U34. The polypeptide is tRNA-specific 2-thiouridylase MnmA (Nostoc sp. (strain PCC 7120 / SAG 25.82 / UTEX 2576)).